Here is a 788-residue protein sequence, read N- to C-terminus: Cap-specific mRNA (nucleoside-2'-O-)-methyltransferase 1 (788 aa).

A G-patch domain is found at 25 to 71; it reads YSNKAMEMMKKMGYENDKGLGKSNQGRLEPIIAVQQDGRRGFGLKLD. Substrate is bound by residues 143–147 and Arg-158; that span reads KTVFD. The region spanning 171–384 is the RrmJ-type SAM-dependent 2'-O-MTase domain; the sequence is IFLNRAAVKM…ERYLVCKYKR (214 aa). Asn-174 serves as a coordination point for S-adenosyl-L-methionine. Residue Lys-179 is part of the active site. An S-adenosyl-L-methionine-binding site is contributed by 215–221; it reads CAGPGGF. Asp-298 is a catalytic residue. Substrate is bound at residue 308 to 310; the sequence is NIQ. Residue Lys-338 is the Proton acceptor of the active site. Asn-373 contributes to the substrate binding site.

Interacts (via C-terminus) with r2d2 (via C-terminus).

The protein resides in the nucleus. It localises to the cytoplasm. The enzyme catalyses a 5'-end (N(7)-methyl 5'-triphosphoguanosine)-ribonucleoside in mRNA + S-adenosyl-L-methionine = a 5'-end (N(7)-methyl 5'-triphosphoguanosine)-(2'-O-methyl-ribonucleoside) in mRNA + S-adenosyl-L-homocysteine + H(+). Functionally, S-adenosyl-L-methionine-dependent methyltransferase that mediates mRNA cap1 2'-O-ribose methylation to the 5'-cap structure of mRNAs. Methylates the ribose of the first nucleotide of a m(7)GpppG-capped mRNA to produce m(7)GpppNmp (cap1). Positively regulates the Ago2-dependent small RNA pathway, with roles in both siRNA biogenesis and RISC assembly. Involved in facilitating conversion of pre-RISC into holo-RISC, possibly by promoting the unwinding of Ago2-bound siRNA duplexes and thus the retention of the guide strand in holo-RISC. This Drosophila melanogaster (Fruit fly) protein is Cap-specific mRNA (nucleoside-2'-O-)-methyltransferase 1.